Reading from the N-terminus, the 420-residue chain is COP9 signalosome complex subunit 5 (420 aa).

The MPN domain maps to 73–208 (AALSALACMK…IGAFRTMPET (136 aa)). The Zn(2+) site is built by His-154, His-156, and Asp-167. A JAMM motif motif is present at residues 154–167 (HSHPGYGCWLSGID).

It belongs to the peptidase M67A family. CSN5 subfamily. In terms of assembly, component of the COP9 signalosome (CSN) complex.

The protein localises to the cytoplasm. The protein resides in the nucleus. Its function is as follows. Catalytic component of the COP9 signalosome (CSN) complex that acts as an regulator of the ubiquitin (Ubl) conjugation pathway by mediating the deneddylation of the cullin subunit of SCF-type E3 ubiquitin-protein ligase complexes. The CSN complex is involved in the regulation of the mating pheromone response. This is COP9 signalosome complex subunit 5 (RRI1) from Eremothecium gossypii (strain ATCC 10895 / CBS 109.51 / FGSC 9923 / NRRL Y-1056) (Yeast).